The chain runs to 554 residues: Serine/threonine-protein phosphatase 2B catalytic subunit (554 aa).

3 residues coordinate Fe cation: Asp119, His121, and Asp147. 2 residues coordinate Zn(2+): Asp147 and Asn179. His180 functions as the Proton donor in the catalytic mechanism. Zn(2+)-binding residues include His228 and His310. Residues 411–433 form a disordered region; it reads LKESAPTQHKQPAPSENENKADQ. Over residues 415–426 the composition is skewed to polar residues; sequence APTQHKQPAPSE.

The protein belongs to the PPP phosphatase family. PP-2B subfamily. As to quaternary structure, composed of two components (A and B), the A component is the catalytic subunit and the B component confers calcium sensitivity. It depends on Fe(3+) as a cofactor. The cofactor is Zn(2+).

The enzyme catalyses O-phospho-L-seryl-[protein] + H2O = L-seryl-[protein] + phosphate. It carries out the reaction O-phospho-L-threonyl-[protein] + H2O = L-threonyl-[protein] + phosphate. In terms of biological role, calcium-dependent, calmodulin-stimulated protein phosphatase. This subunit may have a role in the calmodulin activation of calcineurin. Appears to be involved in cytokinesis, mating, transport, nuclear and spindle pole body positioning, and cell shape. The protein is Serine/threonine-protein phosphatase 2B catalytic subunit (ppb1) of Schizosaccharomyces pombe (strain 972 / ATCC 24843) (Fission yeast).